Consider the following 468-residue polypeptide: Tyrosine-protein phosphatase YopH (468 aa).

The disordered stretch occupies residues 127 to 194 (ARGHVSSHSH…TVSPYGPEAR (68 aa)). Residues 130 to 141 (HVSSHSHSALHA) are compositionally biased toward low complexity. The Tyrosine-protein phosphatase domain maps to 152–461 (SHLDPRTPPL…DVLIKLAEGQ (310 aa)). The active-site Phosphocysteine intermediate is Cys-403.

Belongs to the protein-tyrosine phosphatase family. Non-receptor class subfamily.

The protein localises to the secreted. It carries out the reaction O-phospho-L-tyrosyl-[protein] + H2O = L-tyrosyl-[protein] + phosphate. Essential virulence determinant. This protein is a protein tyrosine phosphatase. The essential function of YopH in Yersinia pathogenesis is host-protein dephosphorylation. It contributes to the ability of the bacteria to resist phagocytosis by peritoneal macrophages. This is Tyrosine-protein phosphatase YopH (yopH) from Yersinia pseudotuberculosis serotype I (strain IP32953).